The chain runs to 408 residues: S-adenosylmethionine synthase (408 aa).

His19 lines the ATP pocket. Asp21 provides a ligand contact to Mg(2+). Glu47 contributes to the K(+) binding site. Residues Glu60 and Gln104 each contribute to the L-methionine site. Positions 104–114 (QSPEIASGVDH) are flexible loop. ATP-binding positions include 185-187 (DAK), 255-256 (RF), Asp264, 270-271 (RK), Ala287, and Lys291. Asp264 contacts L-methionine. Lys295 serves as a coordination point for L-methionine.

This sequence belongs to the AdoMet synthase family. As to quaternary structure, homotetramer; dimer of dimers. It depends on Mg(2+) as a cofactor. The cofactor is K(+).

It is found in the cytoplasm. The catalysed reaction is L-methionine + ATP + H2O = S-adenosyl-L-methionine + phosphate + diphosphate. Its pathway is amino-acid biosynthesis; S-adenosyl-L-methionine biosynthesis; S-adenosyl-L-methionine from L-methionine: step 1/1. Its function is as follows. Catalyzes the formation of S-adenosylmethionine (AdoMet) from methionine and ATP. The overall synthetic reaction is composed of two sequential steps, AdoMet formation and the subsequent tripolyphosphate hydrolysis which occurs prior to release of AdoMet from the enzyme. This is S-adenosylmethionine synthase from Deinococcus radiodurans (strain ATCC 13939 / DSM 20539 / JCM 16871 / CCUG 27074 / LMG 4051 / NBRC 15346 / NCIMB 9279 / VKM B-1422 / R1).